Reading from the N-terminus, the 361-residue chain is Phosphoserine aminotransferase (361 aa).

Position 42 (arginine 42) interacts with L-glutamate. Residues 76 to 77 (AR), tryptophan 102, threonine 153, aspartate 173, and glutamine 196 each bind pyridoxal 5'-phosphate. Lysine 197 is subject to N6-(pyridoxal phosphate)lysine. Position 238 to 239 (238 to 239 (NT)) interacts with pyridoxal 5'-phosphate.

Belongs to the class-V pyridoxal-phosphate-dependent aminotransferase family. SerC subfamily. Homodimer. The cofactor is pyridoxal 5'-phosphate.

It is found in the cytoplasm. It carries out the reaction O-phospho-L-serine + 2-oxoglutarate = 3-phosphooxypyruvate + L-glutamate. The enzyme catalyses 4-(phosphooxy)-L-threonine + 2-oxoglutarate = (R)-3-hydroxy-2-oxo-4-phosphooxybutanoate + L-glutamate. It participates in amino-acid biosynthesis; L-serine biosynthesis; L-serine from 3-phospho-D-glycerate: step 2/3. The protein operates within cofactor biosynthesis; pyridoxine 5'-phosphate biosynthesis; pyridoxine 5'-phosphate from D-erythrose 4-phosphate: step 3/5. Catalyzes the reversible conversion of 3-phosphohydroxypyruvate to phosphoserine and of 3-hydroxy-2-oxo-4-phosphonooxybutanoate to phosphohydroxythreonine. The chain is Phosphoserine aminotransferase from Yersinia pestis bv. Antiqua (strain Angola).